A 233-amino-acid polypeptide reads, in one-letter code: N-(5'-phosphoribosyl)anthranilate isomerase (233 aa).

The protein belongs to the TrpF family.

It catalyses the reaction N-(5-phospho-beta-D-ribosyl)anthranilate = 1-(2-carboxyphenylamino)-1-deoxy-D-ribulose 5-phosphate. The protein operates within amino-acid biosynthesis; L-tryptophan biosynthesis; L-tryptophan from chorismate: step 3/5. This Synechococcus sp. (strain JA-2-3B'a(2-13)) (Cyanobacteria bacterium Yellowstone B-Prime) protein is N-(5'-phosphoribosyl)anthranilate isomerase.